The chain runs to 155 residues: Endoribonuclease YbeY (155 aa).

Zn(2+)-binding residues include His-120, His-124, and His-130.

The protein belongs to the endoribonuclease YbeY family. Requires Zn(2+) as cofactor.

The protein resides in the cytoplasm. In terms of biological role, single strand-specific metallo-endoribonuclease involved in late-stage 70S ribosome quality control and in maturation of the 3' terminus of the 16S rRNA. The protein is Endoribonuclease YbeY of Alkaliphilus metalliredigens (strain QYMF).